The sequence spans 79 residues: Large ribosomal subunit protein uL30 (79 aa).

Belongs to the universal ribosomal protein uL30 family. Part of the 50S ribosomal subunit.

The protein is Large ribosomal subunit protein uL30 of Anaeromyxobacter sp. (strain Fw109-5).